A 209-amino-acid chain; its full sequence is MPVAVMADNAFSFRKLLDQCENQELEAPGGIATPPVYGQLLALYLLQNDMNNARYLWKRIPPAIKSANSELGGIWSVGQRIWQRDFPGIYTTINAHQWSETVQPIMEALRDATRRRAFALVSQAYTSIIADDFAAFVGLPVEEAVKGVLEQGWQADSTTRMVLPRKPAPGALDVSLNRFIPLSEPAPVPPIPNEQQLARLTDYVAFLEN.

The region spanning 8–179 is the PCI domain; sequence DNAFSFRKLL…GALDVSLNRF (172 aa). Ser-175 is modified (phosphoserine).

The protein belongs to the CSN8 family. As to quaternary structure, component of the CSN complex, composed of COPS1/GPS1, COPS2, COPS3, COPS4, COPS5, COPS6, COPS7 (COPS7A or COPS7B), COPS8 and COPS9. In the complex, it probably interacts directly with COPS3, COPS4 and COPS7 (COPS7A or COPS7B).

It is found in the cytoplasm. The protein localises to the nucleus. Component of the COP9 signalosome complex (CSN), a complex involved in various cellular and developmental processes. The CSN complex is an essential regulator of the ubiquitin (Ubl) conjugation pathway by mediating the deneddylation of the cullin subunits of SCF-type E3 ligase complexes, leading to decrease the Ubl ligase activity of SCF-type complexes such as SCF, CSA or DDB2. The complex is also involved in phosphorylation of p53/TP53, c-jun/JUN, IkappaBalpha/NFKBIA, ITPK1 and IRF8/ICSBP, possibly via its association with CK2 and PKD kinases. CSN-dependent phosphorylation of TP53 and JUN promotes and protects degradation by the Ubl system, respectively. The protein is COP9 signalosome complex subunit 8 (Cops8) of Rattus norvegicus (Rat).